Here is a 936-residue protein sequence, read N- to C-terminus: Coiled-coil domain-containing protein 191 (936 aa).

Coiled coils occupy residues 189–270 (RLTM…VKAA) and 364–440 (RDYT…LQAA). A disordered region spans residues 495 to 541 (LGRTTTGNLQGSLQNVSLSAPGNKQHKTLGAEPSQQPGSNETLRTTS). Composition is skewed to polar residues over residues 497–516 (RTTTGNLQGSLQNVSLSAPG) and 527–541 (PSQQPGSNETLRTTS). The stretch at 554-592 (NRHVFQQQLIEKQKKKLQEQQKTILELKKNLQLAEAQWA) forms a coiled coil. Disordered stretches follow at residues 607–656 (LSKP…TPHP) and 691–714 (KAQEEERQKREAEEKEAQLERKRE). A coiled-coil region spans residues 662-739 (EERAIQRAEC…IKRNQQLEAI (78 aa)).

This chain is Coiled-coil domain-containing protein 191 (CCDC191), found in Homo sapiens (Human).